A 296-amino-acid chain; its full sequence is 4-hydroxy-tetrahydrodipicolinate synthase (296 aa).

Position 49 (T49) interacts with pyruvate. Y137 functions as the Proton donor/acceptor in the catalytic mechanism. The active-site Schiff-base intermediate with substrate is the K165. I208 lines the pyruvate pocket.

This sequence belongs to the DapA family. In terms of assembly, homotetramer; dimer of dimers.

The protein localises to the cytoplasm. The enzyme catalyses L-aspartate 4-semialdehyde + pyruvate = (2S,4S)-4-hydroxy-2,3,4,5-tetrahydrodipicolinate + H2O + H(+). Its pathway is amino-acid biosynthesis; L-lysine biosynthesis via DAP pathway; (S)-tetrahydrodipicolinate from L-aspartate: step 3/4. Its function is as follows. Catalyzes the condensation of (S)-aspartate-beta-semialdehyde [(S)-ASA] and pyruvate to 4-hydroxy-tetrahydrodipicolinate (HTPA). This Ehrlichia canis (strain Jake) protein is 4-hydroxy-tetrahydrodipicolinate synthase.